The primary structure comprises 30 residues: Large ribosomal subunit protein bL25 (30 aa).

It belongs to the bacterial ribosomal protein bL25 family. As to quaternary structure, part of the 50S ribosomal subunit; part of the 5S rRNA/L5/L18/L25 subcomplex. Contacts the 5S rRNA. Binds to the 5S rRNA independently of L5 and L18.

Its function is as follows. This is one of the proteins that binds to the 5S RNA in the ribosome where it forms part of the central protuberance. The chain is Large ribosomal subunit protein bL25 (rplY) from Anabaena variabilis.